The chain runs to 751 residues: E3 ubiquitin-protein ligase SMURF2 (751 aa).

Positions 1 to 119 constitute a C2 domain; it reads MSNQGSRRNG…TGYQRLDLCK (119 aa). Positions 157–190 constitute a WW 1 domain; it reads NDLPDGWEERRTASGRIQYLNHITRTTQWERPTR. The segment covering 214 to 226 has biased composition (polar residues); it reads GTNGASCGQTSDP. Positions 214–236 are disordered; it reads GTNGASCGQTSDPRISERRVRSQ. WW domains lie at 251-284 and 297-330; these read PDLP…DPRV and GPLP…DPRL. The HECT domain maps to 417–751; that stretch reads RPKDLWKRLM…IEETCGFAVE (335 aa). Cys-719 functions as the Glycyl thioester intermediate in the catalytic mechanism.

The protein resides in the nucleus. It localises to the cytoplasm. It is found in the cell membrane. Its subcellular location is the membrane raft. It carries out the reaction S-ubiquitinyl-[E2 ubiquitin-conjugating enzyme]-L-cysteine + [acceptor protein]-L-lysine = [E2 ubiquitin-conjugating enzyme]-L-cysteine + N(6)-ubiquitinyl-[acceptor protein]-L-lysine.. It participates in protein modification; protein ubiquitination. E3 ubiquitin-protein ligase which accepts ubiquitin from an E2 ubiquitin-conjugating enzyme in the form of a thioester and then directly transfers the ubiquitin to targeted substrates. The chain is E3 ubiquitin-protein ligase SMURF2 (smurf2) from Xenopus laevis (African clawed frog).